A 409-amino-acid polypeptide reads, in one-letter code: Probable peptidoglycan glycosyltransferase FtsW (409 aa).

Helical transmembrane passes span 42 to 62 (LFTL…SASL), 72 to 92 (PFHF…VMLA), 108 to 128 (LLLL…EVNG), 135 to 155 (VGPI…IYMA), 178 to 198 (LLFI…VVVL), 213 to 233 (LWQF…LIIV), 303 to 323 (FLGV…ALII), 337 to 357 (YLAY…IGVA), and 368 to 388 (LPLV…VGLL).

This sequence belongs to the SEDS family. FtsW subfamily.

It is found in the cell inner membrane. It carries out the reaction [GlcNAc-(1-&gt;4)-Mur2Ac(oyl-L-Ala-gamma-D-Glu-L-Lys-D-Ala-D-Ala)](n)-di-trans,octa-cis-undecaprenyl diphosphate + beta-D-GlcNAc-(1-&gt;4)-Mur2Ac(oyl-L-Ala-gamma-D-Glu-L-Lys-D-Ala-D-Ala)-di-trans,octa-cis-undecaprenyl diphosphate = [GlcNAc-(1-&gt;4)-Mur2Ac(oyl-L-Ala-gamma-D-Glu-L-Lys-D-Ala-D-Ala)](n+1)-di-trans,octa-cis-undecaprenyl diphosphate + di-trans,octa-cis-undecaprenyl diphosphate + H(+). Its pathway is cell wall biogenesis; peptidoglycan biosynthesis. Functionally, peptidoglycan polymerase that is essential for cell division. The protein is Probable peptidoglycan glycosyltransferase FtsW of Idiomarina loihiensis (strain ATCC BAA-735 / DSM 15497 / L2-TR).